Consider the following 570-residue polypeptide: Berberine bridge enzyme-like 19 (570 aa).

The signal sequence occupies residues 1 to 30; the sequence is MLTTPPRTFVSVPFFFFFLLFLSLPLSSFS. C42 and C105 are disulfide-bonded. The N-linked (GlcNAc...) asparagine glycan is linked to N80. One can recognise an FAD-binding PCMH-type domain in the interval 83-257; the sequence is STLKPTIIIT…LGYKVKLVPV (175 aa). The 6-(S-cysteinyl)-8alpha-(pros-histidyl)-FAD (His-Cys) cross-link spans 120 to 182; sequence HDYDGLSYIS…RVHGFPAGVC (63 aa). N-linked (GlcNAc...) asparagine glycosylation is found at N341 and N359.

The protein belongs to the oxygen-dependent FAD-linked oxidoreductase family. FAD serves as cofactor. In terms of processing, the FAD cofactor is bound via a bicovalent 6-S-cysteinyl, 8alpha-N1-histidyl FAD linkage.

The protein resides in the secreted. The protein localises to the cell wall. This chain is Berberine bridge enzyme-like 19, found in Arabidopsis thaliana (Mouse-ear cress).